A 392-amino-acid polypeptide reads, in one-letter code: Methylthioribose-1-phosphate isomerase (392 aa).

Aspartate 253 functions as the Proton donor in the catalytic mechanism.

It belongs to the eIF-2B alpha/beta/delta subunits family. MtnA subfamily.

The protein resides in the cytoplasm. Its subcellular location is the nucleus. It catalyses the reaction 5-(methylsulfanyl)-alpha-D-ribose 1-phosphate = 5-(methylsulfanyl)-D-ribulose 1-phosphate. It participates in amino-acid biosynthesis; L-methionine biosynthesis via salvage pathway; L-methionine from S-methyl-5-thio-alpha-D-ribose 1-phosphate: step 1/6. Its function is as follows. Catalyzes the interconversion of methylthioribose-1-phosphate (MTR-1-P) into methylthioribulose-1-phosphate (MTRu-1-P). This is Methylthioribose-1-phosphate isomerase (mri1) from Pyrenophora tritici-repentis (strain Pt-1C-BFP) (Wheat tan spot fungus).